A 408-amino-acid polypeptide reads, in one-letter code: Argininosuccinate synthase (408 aa).

ATP is bound by residues 11-19 (AYSGGLDTS) and Ala-38. L-citrulline contacts are provided by Tyr-91 and Ser-96. Residue Gly-121 participates in ATP binding. Residues Thr-123, Asn-127, and Asp-128 each contribute to the L-aspartate site. Asn-127 provides a ligand contact to L-citrulline. Residues Arg-131, Ser-182, Ser-191, Glu-267, and Tyr-279 each coordinate L-citrulline.

This sequence belongs to the argininosuccinate synthase family. Type 1 subfamily. In terms of assembly, homotetramer.

The protein localises to the cytoplasm. It catalyses the reaction L-citrulline + L-aspartate + ATP = 2-(N(omega)-L-arginino)succinate + AMP + diphosphate + H(+). Its pathway is amino-acid biosynthesis; L-arginine biosynthesis; L-arginine from L-ornithine and carbamoyl phosphate: step 2/3. The sequence is that of Argininosuccinate synthase from Paracoccus denitrificans (strain Pd 1222).